The chain runs to 613 residues: tRNA (uracil-5-)-methyltransferase homolog A (613 aa).

A disordered region spans residues 1–46 (MSEPAAEVPEPMEDCGQDASAVPSSAAPLCQKEEAGPGPAAGPGTQ). Residues 63–136 (FKLELQNVPR…CPLSVRLARP (74 aa)) enclose the RRM domain. The stretch at 170-200 (YTEQLEQKRLECERVLQKLAKEIGNTNRALL) forms a coiled coil. Phosphoserine is present on S368. Residues Q401, E451, and D500 each contribute to the S-adenosyl-L-methionine site. The active-site Nucleophile is the C528. The active-site Proton acceptor is the E571.

This sequence belongs to the class I-like SAM-binding methyltransferase superfamily. RNA M5U methyltransferase family. In terms of tissue distribution, widely expressed at low level. Expressed at higher level in proliferating cells.

The protein localises to the cytoplasm. It localises to the cytosol. It carries out the reaction uridine(54) in tRNA + S-adenosyl-L-methionine = 5-methyluridine(54) in tRNA + S-adenosyl-L-homocysteine + H(+). The enzyme catalyses a uridine in mRNA + S-adenosyl-L-methionine = a 5-methyluridine in mRNA + S-adenosyl-L-homocysteine + H(+). In terms of biological role, S-adenosyl-L-methionine-dependent methyltransferase that catalyzes the formation of 5-methyl-uridine in tRNAs and some mRNAs. Mainly catalyzes the methylation of uridine at position 54 (m5U54) in cytosolic tRNAs. Also able to mediate the formation of 5-methyl-uridine in some mRNAs. This is tRNA (uracil-5-)-methyltransferase homolog A from Mus musculus (Mouse).